We begin with the raw amino-acid sequence, 483 residues long: tRNA-2-methylthio-N(6)-dimethylallyladenosine synthase (483 aa).

The region spanning 31 to 148 (KKLYIETQGC…LPQMLDQHHA (118 aa)) is the MTTase N-terminal domain. [4Fe-4S] cluster is bound by residues cysteine 40, cysteine 77, cysteine 111, cysteine 192, cysteine 196, and cysteine 199. The region spanning 178–410 (RVEGFKAFVS…QQVIKQSSIE (233 aa)) is the Radical SAM core domain. Residues 413–477 (DAMLGKIERV…LNLVYGELLN (65 aa)) enclose the TRAM domain.

The protein belongs to the methylthiotransferase family. MiaB subfamily. Monomer. [4Fe-4S] cluster is required as a cofactor.

Its subcellular location is the cytoplasm. It catalyses the reaction N(6)-dimethylallyladenosine(37) in tRNA + (sulfur carrier)-SH + AH2 + 2 S-adenosyl-L-methionine = 2-methylsulfanyl-N(6)-dimethylallyladenosine(37) in tRNA + (sulfur carrier)-H + 5'-deoxyadenosine + L-methionine + A + S-adenosyl-L-homocysteine + 2 H(+). Catalyzes the methylthiolation of N6-(dimethylallyl)adenosine (i(6)A), leading to the formation of 2-methylthio-N6-(dimethylallyl)adenosine (ms(2)i(6)A) at position 37 in tRNAs that read codons beginning with uridine. This Acinetobacter baumannii (strain AB0057) protein is tRNA-2-methylthio-N(6)-dimethylallyladenosine synthase.